We begin with the raw amino-acid sequence, 426 residues long: Squamosa promoter-binding-like protein 10 (426 aa).

The segment at 178–255 (PPRCQAEGCK…AEHNRRRRKP (78 aa)) adopts an SBP-type zinc-finger fold. Zn(2+) contacts are provided by Cys-181, Cys-186, Cys-203, His-206, Cys-222, Cys-225, His-229, and Cys-241. The Bipartite nuclear localization signal signature appears at 238–254 (KRSCRKRLAEHNRRRRK). Composition is skewed to low complexity over residues 268–287 (DAAA…AATS) and 401–417 (SDQN…NNNN). Disordered regions lie at residues 268 to 290 (DAAA…SYTG) and 392 to 426 (PSTA…VDFM).

Expressed in stems, leaf sheaths, and young panicles.

It is found in the nucleus. Trans-acting factor that binds specifically to the consensus nucleotide sequence 5'-TNCGTACAA-3'. This chain is Squamosa promoter-binding-like protein 10 (SPL10), found in Oryza sativa subsp. indica (Rice).